The sequence spans 264 residues: Thymidylate synthase (264 aa).

A dUMP-binding site is contributed by arginine 21. Histidine 51 contributes to the (6R)-5,10-methylene-5,6,7,8-tetrahydrofolate binding site. Residue 126-127 (RR) coordinates dUMP. Catalysis depends on cysteine 146, which acts as the Nucleophile. Residues 166–169 (RSGD), asparagine 177, and 207–209 (HLY) each bind dUMP. Position 169 (aspartate 169) interacts with (6R)-5,10-methylene-5,6,7,8-tetrahydrofolate. Residue alanine 263 participates in (6R)-5,10-methylene-5,6,7,8-tetrahydrofolate binding.

Belongs to the thymidylate synthase family. Bacterial-type ThyA subfamily. As to quaternary structure, homodimer.

It is found in the cytoplasm. The catalysed reaction is dUMP + (6R)-5,10-methylene-5,6,7,8-tetrahydrofolate = 7,8-dihydrofolate + dTMP. The protein operates within pyrimidine metabolism; dTTP biosynthesis. In terms of biological role, catalyzes the reductive methylation of 2'-deoxyuridine-5'-monophosphate (dUMP) to 2'-deoxythymidine-5'-monophosphate (dTMP) while utilizing 5,10-methylenetetrahydrofolate (mTHF) as the methyl donor and reductant in the reaction, yielding dihydrofolate (DHF) as a by-product. This enzymatic reaction provides an intracellular de novo source of dTMP, an essential precursor for DNA biosynthesis. The sequence is that of Thymidylate synthase from Xanthomonas axonopodis pv. citri (strain 306).